Reading from the N-terminus, the 743-residue chain is Apo-petrobactin exporter (743 aa).

12 helical membrane-spanning segments follow: residues 20–40, 199–219, 223–243, 258–278, 303–323, 337–357, 406–426, 561–581, 584–604, 613–633, 672–692, and 694–714; these read WITLSVWILITLLLSFTLPQV, ADVKLLVATVLLVLVLLILLY, ILAILPLLVVGFAYGIISPTL, AISIMTVLLFGAGTDYCLFLI, GGAIIMSALTVVLGLGTLLLA, VAVFIMGIAALTILPAFLLIF, WTIIMLTVFVLGGLASFVPRI, DEAVIIPVMISIIALLLLVYL, IVAMIYLIVTVVLSFFSALGA, MGAPAIQGAIPLYAFVFLVAL, AGLILAGTFAVLGTLPIQVLV, and FGIVTAIGVLLDTFIVRPLLV.

This sequence belongs to the resistance-nodulation-cell division (RND) (TC 2.A.6) family. MmpL subfamily.

The protein resides in the cell membrane. Exports the siderophore petrobactin. This chain is Apo-petrobactin exporter, found in Bacillus anthracis.